A 540-amino-acid polypeptide reads, in one-letter code: Cobalt-factor III methyltransferase (540 aa).

[4Fe-4S] cluster contacts are provided by Cys402, Cys405, Cys439, and Cys443.

This sequence in the N-terminal section; belongs to the precorrin methyltransferase family. [4Fe-4S] cluster serves as cofactor.

It catalyses the reaction Co(II)-factor III + AH2 + S-adenosyl-L-methionine = Co-precorrin-4 + A + S-adenosyl-L-homocysteine. It functions in the pathway cofactor biosynthesis; adenosylcobalamin biosynthesis. Methyltransferase that catalyzes the reduction, ring contraction and methylation of C-17 in cobalt-factor III to form cobalt-precorrin-4. Is also able to convert cobalt-precorrin-3 to cobalt-precorrin-4. This chain is Cobalt-factor III methyltransferase (cbiH60), found in Priestia megaterium (Bacillus megaterium).